The following is a 54-amino-acid chain: Ovomucoid (54 aa).

The region spanning 4 to 54 (VDCSEYPKPVCSPEYMPLCGSDSKTYNNKCDFCSAVVESNGTLTLGHFGKC) is the Kazal-like domain. Disulfide bonds link Cys-6/Cys-36, Cys-14/Cys-33, and Cys-22/Cys-54. N-linked (GlcNAc...) asparagine glycosylation occurs at Asn-43.

The protein resides in the secreted. The protein is Ovomucoid of Casuarius casuarius (Southern cassowary).